The following is a 1310-amino-acid chain: Cadherin-related family member 2 (1310 aa).

The signal sequence occupies residues methionine 1–alanine 20. Residues asparagine 21–serine 1154 lie on the Extracellular side of the membrane. Cadherin domains lie at leucine 27–phenylalanine 124, glutamine 125–phenylalanine 241, and valine 242–phenylalanine 353. N-linked (GlcNAc...) asparagine glycans are attached at residues asparagine 29, asparagine 134, asparagine 182, asparagine 188, asparagine 195, asparagine 300, asparagine 355, asparagine 371, asparagine 401, asparagine 460, asparagine 565, asparagine 600, asparagine 616, asparagine 632, asparagine 680, asparagine 696, asparagine 701, asparagine 775, asparagine 821, asparagine 871, asparagine 877, asparagine 911, asparagine 932, and asparagine 1107. 6 consecutive Cadherin domains span residues alanine 368–phenylalanine 480, proline 481–valine 586, valine 586–phenylalanine 695, asparagine 696–leucine 808, valine 810–phenylalanine 928, and proline 930–glutamate 1058. Residues valine 1155 to valine 1175 traverse the membrane as a helical segment. At cysteine 1176–leucine 1310 the chain is on the cytoplasmic side. Residues serine 1180–leucine 1310 form a mediates interaction with USH1C and MYO7B and is required for proper localization to microvilli tips and function in microvilli organization region. At serine 1248 the chain carries Phosphoserine. The segment covering asparagine 1259–proline 1268 has biased composition (basic and acidic residues). The segment at asparagine 1259–leucine 1310 is disordered. The residue at position 1299 (serine 1299) is a Phosphoserine. Over residues serine 1299–leucine 1310 the composition is skewed to polar residues.

In terms of assembly, part of the IMAC/intermicrovillar adhesion complex/intermicrovillar tip-link complex composed of ANKS4B, MYO7B, USH1C, CDHR2 and CDHR5. Interacts with MAST2. Interacts (via cytoplasmic domain) with USH1C and MYO7B; required for proper localization of CDHR2 to microvilli tips and its function in brush border differentiation. Highly expressed in liver, kidney and colon. Moderately expressed in small intestine. Down-regulated in a number of liver and colon cancers. Expressed in duodenum with higher expression in enterocytes along the villus axis and lower expression in crypts (at protein level).

It is found in the apical cell membrane. The protein resides in the cell projection. Its subcellular location is the microvillus membrane. The protein localises to the cell junction. Intermicrovillar adhesion molecule that forms, via its extracellular domain, calcium-dependent heterophilic complexes with CDHR5 on adjacent microvilli. Thereby, controls the packing of microvilli at the apical membrane of epithelial cells. Through its cytoplasmic domain, interacts with microvillus cytoplasmic proteins to form the intermicrovillar adhesion complex/IMAC. This complex plays a central role in microvilli and epithelial brush border differentiation. May also play a role in cell-cell adhesion and contact inhibition in epithelial cells. The sequence is that of Cadherin-related family member 2 from Homo sapiens (Human).